The chain runs to 210 residues: ATP-dependent dethiobiotin synthetase BioD (210 aa).

12-17 (NVGKTH) provides a ligand contact to ATP. A Mg(2+)-binding site is contributed by T16. K37 is an active-site residue. T41 contacts substrate. E114 provides a ligand contact to Mg(2+). ATP is bound at residue 114–117 (EGAG).

The protein belongs to the dethiobiotin synthetase family. As to quaternary structure, homodimer. The cofactor is Mg(2+).

The protein resides in the cytoplasm. It carries out the reaction (7R,8S)-7,8-diammoniononanoate + CO2 + ATP = (4R,5S)-dethiobiotin + ADP + phosphate + 3 H(+). Its pathway is cofactor biosynthesis; biotin biosynthesis; biotin from 7,8-diaminononanoate: step 1/2. Functionally, catalyzes a mechanistically unusual reaction, the ATP-dependent insertion of CO2 between the N7 and N8 nitrogen atoms of 7,8-diaminopelargonic acid (DAPA, also called 7,8-diammoniononanoate) to form a ureido ring. The sequence is that of ATP-dependent dethiobiotin synthetase BioD from Sulfurovum sp. (strain NBC37-1).